Reading from the N-terminus, the 297-residue chain is MPEAGLAEAFGVTEEARAKINLALHVTGQRPDGYHLLEMLVTFADCGDRLGFLPAQADAFTLSGPFGAMLAGDGNNLVLRARDLLREQVGALAFPVHIHLQKNLPIASGIGGGSADAAATLRGLMRLWGMDLPAETLASLALTLGADVPMCFESRPLIARGIGEKIEAVPDLPAFAMVLANPLKGVSTPEVFRRLAAKNNPALHLARSLSATSDWLTAIGSARNDLEPPACELVPEIAMISQMLQAQGALITRMSGSGATCFGIFSTMTAAQEAAAALHGERPDWYVQATETVSGGM.

Residue Lys-19 is part of the active site. 105 to 115 (PIASGIGGGSA) serves as a coordination point for ATP. Asp-147 is a catalytic residue.

This sequence belongs to the GHMP kinase family. IspE subfamily.

The enzyme catalyses 4-CDP-2-C-methyl-D-erythritol + ATP = 4-CDP-2-C-methyl-D-erythritol 2-phosphate + ADP + H(+). The protein operates within isoprenoid biosynthesis; isopentenyl diphosphate biosynthesis via DXP pathway; isopentenyl diphosphate from 1-deoxy-D-xylulose 5-phosphate: step 3/6. Its function is as follows. Catalyzes the phosphorylation of the position 2 hydroxy group of 4-diphosphocytidyl-2C-methyl-D-erythritol. This Rhizobium etli (strain CIAT 652) protein is 4-diphosphocytidyl-2-C-methyl-D-erythritol kinase.